The primary structure comprises 172 residues: MORN repeat-containing protein 5 (172 aa).

3 MORN repeats span residues 8–30, 31–53, and 54–75; these read YIGE…TETK, YIGE…NGSR, and FDAV…DGLQ.

Its subcellular location is the cell projection. It localises to the cilium. The protein resides in the flagellum. In Bos taurus (Bovine), this protein is MORN repeat-containing protein 5 (MORN5).